Here is a 109-residue protein sequence, read N- to C-terminus: uncharacterized protein (109 aa).

It is found in the mitochondrion. This is an uncharacterized protein from Arabidopsis thaliana (Mouse-ear cress).